The following is a 275-amino-acid chain: Bis(5'-nucleosyl)-tetraphosphatase, symmetrical (275 aa).

The protein belongs to the Ap4A hydrolase family.

It carries out the reaction P(1),P(4)-bis(5'-adenosyl) tetraphosphate + H2O = 2 ADP + 2 H(+). Hydrolyzes diadenosine 5',5'''-P1,P4-tetraphosphate to yield ADP. This Haemophilus influenzae (strain PittGG) protein is Bis(5'-nucleosyl)-tetraphosphatase, symmetrical.